Consider the following 261-residue polypeptide: Calbindin (261 aa).

An N-acetylalanine modification is found at alanine 2. The tract at residues 2-7 (AESHLQ) is interaction with RANBP9. 5 consecutive EF-hand domains span residues 11 to 46 (ITAS…LQQA), 53 to 88 (ELSP…EENF), 98 to 133 (KSCE…LLEK), 142 to 177 (KLAE…QENF), and 186 to 221 (MCGK…LCEK). Residues aspartate 24, aspartate 26, serine 28, tyrosine 30, and glutamate 35 each coordinate Ca(2+). 13 residues coordinate Ca(2+): aspartate 111, aspartate 113, glutamate 122, aspartate 155, asparagine 157, aspartate 159, lysine 161, glutamate 166, aspartate 199, aspartate 201, asparagine 203, tyrosine 205, and glutamate 210.

Belongs to the calbindin family. As to quaternary structure, interacts with RANBP9.

Its function is as follows. Buffers cytosolic calcium. May stimulate a membrane Ca(2+)-ATPase and a 3',5'-cyclic nucleotide phosphodiesterase. This Pongo abelii (Sumatran orangutan) protein is Calbindin (CALB1).